The chain runs to 339 residues: DNA-directed RNA polymerase subunit alpha (339 aa).

Residues 1–237 (MENELMYMNW…EQMNVFINFD (237 aa)) form an alpha N-terminal domain (alpha-NTD) region. Residues 256-339 (FNENLYRSVN…PPAEDNKEGE (84 aa)) form an alpha C-terminal domain (alpha-CTD) region.

The protein belongs to the RNA polymerase alpha chain family. As to quaternary structure, homodimer. The RNAP catalytic core consists of 2 alpha, 1 beta, 1 beta' and 1 omega subunit. When a sigma factor is associated with the core the holoenzyme is formed, which can initiate transcription.

The catalysed reaction is RNA(n) + a ribonucleoside 5'-triphosphate = RNA(n+1) + diphosphate. In terms of biological role, DNA-dependent RNA polymerase catalyzes the transcription of DNA into RNA using the four ribonucleoside triphosphates as substrates. The sequence is that of DNA-directed RNA polymerase subunit alpha from Desulfosudis oleivorans (strain DSM 6200 / JCM 39069 / Hxd3) (Desulfococcus oleovorans).